Here is a 112-residue protein sequence, read N- to C-terminus: MKKCRGRPKCPRRVEQTPDITYFKPRGVPLSDLEVVSLTVEELEALRLVDIEGLRQEDAASRVGISRRAFWEDLKSARMKVAIALSKGKAIEIKGGNYIRAESSDINEDADT.

Belongs to the UPF0251 family.

The protein is UPF0251 protein MA_4245 of Methanosarcina acetivorans (strain ATCC 35395 / DSM 2834 / JCM 12185 / C2A).